Here is a 272-residue protein sequence, read N- to C-terminus: 2-amino-3,7-dideoxy-D-threo-hept-6-ulosonate synthase (272 aa).

The active-site Proton acceptor is the D33. 1-deoxy-D-threo-hexo-2,5-diulose 6-phosphate-binding positions include D33–S37 and Y153–R155. The active-site Proton donor is the Y153. K184 acts as the Schiff-base intermediate with substrate in catalysis. Residues G209–G210 and G237–R238 contribute to the 1-deoxy-D-threo-hexo-2,5-diulose 6-phosphate site.

The protein belongs to the DeoC/FbaB aldolase family. ADHS subfamily. In terms of assembly, homodecamer.

It carries out the reaction 1-deoxy-D-threo-hexo-2,5-diulose 6-phosphate + L-aspartate 4-semialdehyde = 2,3-dioxopropyl phosphate + 2-amino-2,3,7-trideoxy-D-lyxo-hept-6-ulosonate. Catalyzes a transaldol reaction between 6-deoxy-5-ketofructose 1-phosphate (DKFP) and L-aspartate semialdehyde (ASA) with an elimination of hydroxypyruvaldehyde phosphate to yield 2-amino-3,7-dideoxy-D-threo-hept-6-ulosonate (ADH). Plays a key role in an alternative pathway of the biosynthesis of 3-dehydroquinate (DHQ), which is involved in the canonical pathway for the biosynthesis of aromatic amino acids. In Methanococcus vannielii (strain ATCC 35089 / DSM 1224 / JCM 13029 / OCM 148 / SB), this protein is 2-amino-3,7-dideoxy-D-threo-hept-6-ulosonate synthase.